The chain runs to 391 residues: MAIINMSDLDLQGKRVLIREDLNVPVSNGVVTSDARLRASLPTIELALAKGAAVMVMSHLGRPTEGEYNSEFSMQPVVDYLAKALSCPVRLATDYLDGVEVAVGEVVVFENVRFNKGEKKNDEALSKKMAALCDVYVMDAFGTAHRAEASTNGVGLHAPIACAGPLLAQELEALGKALDNPARPLVAIVGGSKVSTKLTVLESLSGIVDQLVVGGGIANTFIAAAGHNVGKSLYEADLIDEAKRLVANAQSRGGDIPVPTDVVVAGEFSPTAAATLKAVNEVGDSDMIFDIGPDSAEALAKIIESAGTIVWNGPVGVFEFDQFGEGTKRIAQAIADSKAFSIAGGGDTLAAVDKYDIADKVSYISTGGGAFLEFLEGKELPAVAMLKQRGA.

Substrate contacts are provided by residues 21 to 23 (DLN), R36, 59 to 62 (HLGR), R113, and R146. ATP is bound by residues K197, E319, and 345 to 348 (GGDT).

This sequence belongs to the phosphoglycerate kinase family. Monomer.

Its subcellular location is the cytoplasm. It catalyses the reaction (2R)-3-phosphoglycerate + ATP = (2R)-3-phospho-glyceroyl phosphate + ADP. It participates in carbohydrate degradation; glycolysis; pyruvate from D-glyceraldehyde 3-phosphate: step 2/5. The polypeptide is Phosphoglycerate kinase (Shewanella sp. (strain ANA-3)).